Reading from the N-terminus, the 434-residue chain is Forkhead box protein A2-A (434 aa).

The fork-head DNA-binding region spans 149–243 (KPPYSYISLI…ENGCYLRRQK (95 aa)). Basic and acidic residues predominate over residues 249-262 (KKPSLREGGGKKLS). 2 disordered regions span residues 249–339 (KKPS…QSHL) and 408–434 (SGLESSPITSDTSYYQGGYSRPIMNSS). Low complexity-rich tracts occupy residues 263–291 (EGASSVGSAANSSSESSVGNESPHSSSSP) and 317–333 (ASQAQHLLSQHHSVLSH). The span at 408–422 (SGLESSPITSDTSYY) shows a compositional bias: polar residues.

As to expression, at gastrula stage, expressed in both the anterior and posterior endoderm, with endodermal expression persisting into early tailbud stages. Expression is absent in gastrula stage ectoderm. During tailbud stages, expressed in the pharyngeal region, the neural floor plate, the midbrain, hindbrain and in cranial neural crest cells. Expressed in the foregut of hatching larvae. In tadpoles, expressed in the pharyngeal pouches and in other anterior endodermal regions. Within the tadpole nervous system, expressed in the neural floor plate, at high levels in the ventral midbrain and hindbrain, and at lower levels in the spinal cord. Expressed in the adult lung and brain.

The protein resides in the nucleus. In terms of biological role, acts as a transcriptional activator during early development, limiting the extent of mesoderm formation in the gastrula. Binds to DNA via the target sequence 5'-GT[AC]AACA-3', with 5'-GTAAACA-3' being the preferred binding site. The chain is Forkhead box protein A2-A (foxa2-a) from Xenopus laevis (African clawed frog).